The primary structure comprises 599 residues: Adenine deaminase (599 aa).

The interval 1-31 (MARSNRRGGRGDPEDDPAWAPPGHRCAGERA) is disordered.

It belongs to the metallo-dependent hydrolases superfamily. Adenine deaminase family. It depends on Mn(2+) as a cofactor.

It catalyses the reaction adenine + H2O + H(+) = hypoxanthine + NH4(+). The polypeptide is Adenine deaminase (Methanopyrus kandleri (strain AV19 / DSM 6324 / JCM 9639 / NBRC 100938)).